A 508-amino-acid chain; its full sequence is 2-isopropylmalate synthase (508 aa).

In terms of domain architecture, Pyruvate carboxyltransferase spans 5–267; sequence IKIFDTTLRD…THRIDTTQIY (263 aa). Positions 14, 202, 204, and 238 each coordinate Mn(2+). The segment at 390–508 is regulatory domain; that stretch reads VIDSFQINSG…SEIGESIISQ (119 aa).

The protein belongs to the alpha-IPM synthase/homocitrate synthase family. LeuA type 1 subfamily. Homodimer. Mn(2+) is required as a cofactor.

The protein localises to the cytoplasm. It catalyses the reaction 3-methyl-2-oxobutanoate + acetyl-CoA + H2O = (2S)-2-isopropylmalate + CoA + H(+). It functions in the pathway amino-acid biosynthesis; L-leucine biosynthesis; L-leucine from 3-methyl-2-oxobutanoate: step 1/4. Its function is as follows. Catalyzes the condensation of the acetyl group of acetyl-CoA with 3-methyl-2-oxobutanoate (2-ketoisovalerate) to form 3-carboxy-3-hydroxy-4-methylpentanoate (2-isopropylmalate). The polypeptide is 2-isopropylmalate synthase (Ruminiclostridium cellulolyticum (strain ATCC 35319 / DSM 5812 / JCM 6584 / H10) (Clostridium cellulolyticum)).